Here is a 248-residue protein sequence, read N- to C-terminus: Chromatin target of PRMT1 protein (248 aa).

Residue A2 is modified to N-acetylalanine. The residue at position 33 (T33) is a Phosphothreonine. 3 positions are modified to phosphoserine: S40, S49, and S64. K70 participates in a covalent cross-link: Glycyl lysine isopeptide (Lys-Gly) (interchain with G-Cter in SUMO2). Positions 151–204 are disordered; it reads LRRGGVRGRGGPGRGGLGRGAMGRGGIGGRGRGMIGRGRGGFGGRGRGRGRGRG. Residues 153-206 form an interaction with PRMT1 region; that stretch reads RGGVRGRGGPGRGGLGRGAMGRGGIGGRGRGMIGRGRGGFGGRGRGRGRGRGAL. Over residues 157–195 the composition is skewed to gly residues; it reads RGRGGPGRGGLGRGAMGRGGIGGRGRGMIGRGRGGFGGR. The short motif at 194 to 203 is the GAR motif; involved in 5hmC binding element; sequence GRGRGRGRGR. A Phosphothreonine modification is found at T242.

In terms of assembly, interacts with PRMT1 and PRMT5. Interacts with the 5FMC complex; the interaction is methylation-dependent. Interacts with FYTTD1, SET and PRC1 complex members CBX4, RNF2 and PHC2; the interactions are methylation-independent. Interacts with ZNF148. Component of the transcription/export (TREX) complex at least composed of ALYREF/THOC4, DDX39B, SARNP/CIP29, CHTOP and the THO subcomplex; TREX seems to have dynamic structure involving ATP-dependent remodeling; in the complex interacts (methylated) with ALYREF/THOC4 and with DDX39B in a methylation-independent manner. Interacts (methylated) with NXF1; the interaction is mutually exclusive with the NXF1:THOC5 interaction. Interacts with WDR77 and ERH. Post-translationally, asymmetrically methylated by PRMT1. Symmetrically methylated by PRMT5. In terms of tissue distribution, expressed in an erythroid progenitor cell line derived from peripheral blood. Expressed in glioblastoma cells.

Its subcellular location is the nucleus. It localises to the nucleolus. The protein resides in the nucleoplasm. The protein localises to the nucleus speckle. Its function is as follows. Plays an important role in the ligand-dependent activation of estrogen receptor target genes. May play a role in the silencing of fetal globin genes. Recruits the 5FMC complex to ZNF148, leading to desumoylation of ZNF148 and subsequent transactivation of ZNF148 target genes. Plays an important role in the tumorigenicity of glioblastoma cells. Binds to 5-hydroxymethylcytosine (5hmC) and associates with the methylosome complex containing PRMT1, PRMT5, MEP50 and ERH. The CHTOP-methylosome complex associated with 5hmC is recruited to selective sites on the chromosome, where it methylates H4R3 and activates the transcription of genes involved in glioblastomagenesis. Required for effective mRNA nuclear export and is a component of the TREX complex which is thought to couple mRNA transcription, processing and nuclear export, and specifically associates with spliced mRNA and not with unspliced pre-mRNA. TREX is recruited to spliced mRNAs by a transcription-independent mechanism, binds to mRNA upstream of the exon-junction complex (EJC) and is recruited in a splicing- and cap-dependent manner to a region near the 5' end of the mRNA where it functions in mRNA export to the cytoplasm via the TAP/NFX1 pathway. The TREX complex is essential for the export of Kaposi's sarcoma-associated herpesvirus (KSHV) intronless mRNAs and infectious virus production. Stimulates DDX39B ATPase and helicase activities. In cooperation with ALYREF/THOC4 enhances NXF1 RNA binding activity. The protein is Chromatin target of PRMT1 protein (CHTOP) of Homo sapiens (Human).